The sequence spans 342 residues: Succinylglutamate desuccinylase (342 aa).

The Zn(2+) site is built by His64, Glu67, and His159. Glu222 is an active-site residue.

Belongs to the AspA/AstE family. Succinylglutamate desuccinylase subfamily. Zn(2+) serves as cofactor.

It carries out the reaction N-succinyl-L-glutamate + H2O = L-glutamate + succinate. The protein operates within amino-acid degradation; L-arginine degradation via AST pathway; L-glutamate and succinate from L-arginine: step 5/5. Functionally, transforms N(2)-succinylglutamate into succinate and glutamate. In Burkholderia orbicola (strain MC0-3), this protein is Succinylglutamate desuccinylase.